Here is a 338-residue protein sequence, read N- to C-terminus: MNVFYDKDADLSLIKGKQVTIIGYGSQGHAHALNLKDSGVNVTVGLRKGGASWSKAENAGLSVKEVAEAVKGADVVMMLLPDEQIADVYAKEVHANIKQGAALAFAHGFNVHYGAVIPRADLDVIMIAPKAPGHTVRGTYSQGGGVPHLIAVAQNKSGAARDIALSYAAANGGGRAGIIETNFREETETDLFGEQAVLCGGTVELIKAGFETLVEAGYAPEMAYFECLHELKLIVDLIYEGGIANMNYSISNNAEYGEYVTGPRIVTEETKKAMKQCLTDIQTGEYAKSFILENKAGAPTLQSRRRLTAEHQIEQVGAKLRAMMPWIAKNKLVDQTKN.

Residues 1-181 enclose the KARI N-terminal Rossmann domain; the sequence is MNVFYDKDAD…GGGRAGIIET (181 aa). NADP(+) contacts are provided by residues 24–27, R47, and S52; that span reads YGSQ. H107 is an active-site residue. G133 contributes to the NADP(+) binding site. Positions 182-327 constitute a KARI C-terminal knotted domain; sequence NFREETETDL…AKLRAMMPWI (146 aa). 4 residues coordinate Mg(2+): D190, E194, E226, and E230. Substrate is bound at residue S251.

It belongs to the ketol-acid reductoisomerase family. Mg(2+) is required as a cofactor.

It catalyses the reaction (2R)-2,3-dihydroxy-3-methylbutanoate + NADP(+) = (2S)-2-acetolactate + NADPH + H(+). The catalysed reaction is (2R,3R)-2,3-dihydroxy-3-methylpentanoate + NADP(+) = (S)-2-ethyl-2-hydroxy-3-oxobutanoate + NADPH + H(+). It participates in amino-acid biosynthesis; L-isoleucine biosynthesis; L-isoleucine from 2-oxobutanoate: step 2/4. The protein operates within amino-acid biosynthesis; L-valine biosynthesis; L-valine from pyruvate: step 2/4. Functionally, involved in the biosynthesis of branched-chain amino acids (BCAA). Catalyzes an alkyl-migration followed by a ketol-acid reduction of (S)-2-acetolactate (S2AL) to yield (R)-2,3-dihydroxy-isovalerate. In the isomerase reaction, S2AL is rearranged via a Mg-dependent methyl migration to produce 3-hydroxy-3-methyl-2-ketobutyrate (HMKB). In the reductase reaction, this 2-ketoacid undergoes a metal-dependent reduction by NADPH to yield (R)-2,3-dihydroxy-isovalerate. In Burkholderia cenocepacia (strain ATCC BAA-245 / DSM 16553 / LMG 16656 / NCTC 13227 / J2315 / CF5610) (Burkholderia cepacia (strain J2315)), this protein is Ketol-acid reductoisomerase (NADP(+)).